The sequence spans 100 residues: MRYERLAPEAIPGALRDLDGWSLSEQGDAITKEFSFDDFAQAFGFMTECAIIAEKMGHHPEWFNVYRRVDVRLTTHDVGGLTGHDLKLAAAMDQVAKRRV.

This sequence belongs to the pterin-4-alpha-carbinolamine dehydratase family.

The catalysed reaction is (4aS,6R)-4a-hydroxy-L-erythro-5,6,7,8-tetrahydrobiopterin = (6R)-L-erythro-6,7-dihydrobiopterin + H2O. The sequence is that of Putative pterin-4-alpha-carbinolamine dehydratase from Allorhizobium ampelinum (strain ATCC BAA-846 / DSM 112012 / S4) (Agrobacterium vitis (strain S4)).